The primary structure comprises 461 residues: Adenosylmethionine-8-amino-7-oxononanoate aminotransferase (461 aa).

117–118 (GA) is a binding site for pyridoxal 5'-phosphate. Tyr-150 contacts substrate. Pyridoxal 5'-phosphate is bound at residue Asp-263. 3 residues coordinate substrate: Lys-296, Gly-331, and Arg-426. Lys-296 is modified (N6-(pyridoxal phosphate)lysine).

It belongs to the class-III pyridoxal-phosphate-dependent aminotransferase family. BioA subfamily. As to quaternary structure, homodimer. Pyridoxal 5'-phosphate serves as cofactor.

The protein localises to the cytoplasm. It carries out the reaction (8S)-8-amino-7-oxononanoate + S-adenosyl-L-methionine = S-adenosyl-4-methylsulfanyl-2-oxobutanoate + (7R,8S)-7,8-diammoniononanoate. Its pathway is cofactor biosynthesis; biotin biosynthesis; 7,8-diaminononanoate from 8-amino-7-oxononanoate (SAM route): step 1/1. Functionally, catalyzes the transfer of the alpha-amino group from S-adenosyl-L-methionine (SAM) to 7-keto-8-aminopelargonic acid (KAPA) to form 7,8-diaminopelargonic acid (DAPA). It is the only aminotransferase known to utilize SAM as an amino donor. This Methanocaldococcus jannaschii (strain ATCC 43067 / DSM 2661 / JAL-1 / JCM 10045 / NBRC 100440) (Methanococcus jannaschii) protein is Adenosylmethionine-8-amino-7-oxononanoate aminotransferase.